The sequence spans 206 residues: Cytochrome b-245 chaperone 1 homolog (206 aa).

The chain crosses the membrane as a helical span at residues 21 to 43 (GIRSWSILVGIASVGLAAAYYSS). Residues 172 to 206 (ADDDYPDDDDGIEDLGLGDSSDSQDDPDGDDDEEH) are disordered. Acidic residues-rich tracts occupy residues 174–184 (DDYPDDDDGIE) and 193–206 (DSQD…DEEH).

It belongs to the CYBC1 family.

The protein resides in the endoplasmic reticulum membrane. Functions as a chaperone necessary for a stable expression of the CYBA and CYBB subunits of the cytochrome b-245 heterodimer. The chain is Cytochrome b-245 chaperone 1 homolog from Danio rerio (Zebrafish).